The sequence spans 617 residues: tRNA uridine 5-carboxymethylaminomethyl modification enzyme MnmG (617 aa).

FAD-binding positions include 9–14, V120, and T175; that span reads GAGHAG. Residue 267–281 coordinates NAD(+); the sequence is GPRYCPSIEDKVVRF. Q364 serves as a coordination point for FAD.

The protein belongs to the MnmG family. As to quaternary structure, homodimer. Heterotetramer of two MnmE and two MnmG subunits. Requires FAD as cofactor.

The protein localises to the cytoplasm. In terms of biological role, NAD-binding protein involved in the addition of a carboxymethylaminomethyl (cmnm) group at the wobble position (U34) of certain tRNAs, forming tRNA-cmnm(5)s(2)U34. The chain is tRNA uridine 5-carboxymethylaminomethyl modification enzyme MnmG from Onion yellows phytoplasma (strain OY-M).